A 152-amino-acid polypeptide reads, in one-letter code: Probable flagellum biosynthesis repressor protein FlbT (152 aa).

The protein belongs to the FlbT family.

In terms of biological role, has a post-transcriptional repressor function in flagellum biogenesis. Associates with the 5'-UTR of fljK mRNA and promotes its degradation. The sequence is that of Probable flagellum biosynthesis repressor protein FlbT from Brucella anthropi (strain ATCC 49188 / DSM 6882 / CCUG 24695 / JCM 21032 / LMG 3331 / NBRC 15819 / NCTC 12168 / Alc 37) (Ochrobactrum anthropi).